The following is a 242-amino-acid chain: Biosynthetic peptidoglycan transglycosylase (242 aa).

A helical membrane pass occupies residues 19–39 (LMVVLAIFWGGGIALFSVAPV).

It belongs to the glycosyltransferase 51 family.

The protein resides in the cell inner membrane. It carries out the reaction [GlcNAc-(1-&gt;4)-Mur2Ac(oyl-L-Ala-gamma-D-Glu-L-Lys-D-Ala-D-Ala)](n)-di-trans,octa-cis-undecaprenyl diphosphate + beta-D-GlcNAc-(1-&gt;4)-Mur2Ac(oyl-L-Ala-gamma-D-Glu-L-Lys-D-Ala-D-Ala)-di-trans,octa-cis-undecaprenyl diphosphate = [GlcNAc-(1-&gt;4)-Mur2Ac(oyl-L-Ala-gamma-D-Glu-L-Lys-D-Ala-D-Ala)](n+1)-di-trans,octa-cis-undecaprenyl diphosphate + di-trans,octa-cis-undecaprenyl diphosphate + H(+). It participates in cell wall biogenesis; peptidoglycan biosynthesis. Its function is as follows. Peptidoglycan polymerase that catalyzes glycan chain elongation from lipid-linked precursors. In Escherichia coli O45:K1 (strain S88 / ExPEC), this protein is Biosynthetic peptidoglycan transglycosylase.